Reading from the N-terminus, the 665-residue chain is DNA ligase (665 aa).

NAD(+)-binding positions include 31-35 (DKEFD), 80-81 (SL), and Glu110. Lys112 (N6-AMP-lysine intermediate) is an active-site residue. NAD(+) is bound by residues Arg133, Glu170, Lys285, and Lys309. Zn(2+) is bound by residues Cys403, Cys406, Cys421, and Cys427. Positions 587–665 (GHTDKLAGQS…NEEEFLKLIS (79 aa)) constitute a BRCT domain.

Belongs to the NAD-dependent DNA ligase family. LigA subfamily. Requires Mg(2+) as cofactor. It depends on Mn(2+) as a cofactor.

The enzyme catalyses NAD(+) + (deoxyribonucleotide)n-3'-hydroxyl + 5'-phospho-(deoxyribonucleotide)m = (deoxyribonucleotide)n+m + AMP + beta-nicotinamide D-nucleotide.. Functionally, DNA ligase that catalyzes the formation of phosphodiester linkages between 5'-phosphoryl and 3'-hydroxyl groups in double-stranded DNA using NAD as a coenzyme and as the energy source for the reaction. It is essential for DNA replication and repair of damaged DNA. The chain is DNA ligase from Bacteroides fragilis (strain ATCC 25285 / DSM 2151 / CCUG 4856 / JCM 11019 / LMG 10263 / NCTC 9343 / Onslow / VPI 2553 / EN-2).